Consider the following 1231-residue polypeptide: MANISSPFGQNEWLVEEMYRKFRDDPSSVDPSWHEFLVDYSPEPTSQPAAEPTRVTSPLVAERAAAAAPQAPPKPADTAAAGNGVVAALAAKTAVPPPAEGDEVAVLRGAAAAVVKNMSASLEVPTATSVRAVPAKLLIDNRIVINNQLKRTRGGKISFTHLLGYALVQAVKKFPNMNRHYTEVDGKPTAVTPAHTNLGLAIDLQGKDGKRSLVVAGIKRCETMRFAQFVTAYEDIVRRARDGKLTTEDFAGVTISLTNPGTIGTVHSVPRLMPGQGAIIGVGAMEYPAEFQGASEERIAELGIGKLITLTSTYDHRIIQGAESGDFLRTIHELLLSDGFWDEVFRELSIPYLPVRWSTDNPDSIVDKNARVMNLIAAYRNRGHLMADTDPLRLDKARFRSHPDLEVLTHGLTLWDLDRVFKVDGFAGAQYKKLRDVLGLLRDAYCRHIGVEYAHILDPEQKEWLEQRVETKHVKPTVAQQKYILSKLNAAEAFETFLQTKYVGQKRFSLEGAESVIPMMDAAIDQCAEHGLDEVVIGMPHRGRLNVLANIVGKPYSQIFTEFEGNLNPSQAHGSGDVKYHLGATGLYLQMFGDNDIQVSLTANPSHLEAVDPVLEGLVRAKQDLLDHGSIDSDGQRAFSVVPLMLHGDAAFAGQGVVAETLNLANLPGYRVGGTIHIIVNNQIGFTTAPEYSRSSEYCTDVAKMIGAPIFHVNGDDPEACVWVARLAVDFRQRFKKDVVIDMLCYRRRGHNEGDDPSMTNPYVYDVVDTKRGARKSYTEALIGRGDISMKEAEDALRDYQGQLERVFNEVRELEKHGVQPSESVESDQMIPAGLATAVDKSLLARIGDAFLALPNGFTAHPRVQPVLEKRREMAYEGKIDWAFGELLALGSLVAEGKLVRLSGQDSRRGTFSQRHSVLIDRHTGEEFTPLQLLATNSDGSPTGGKFLVYDSPLSEYAAVGFEYGYTVGNPDAVVLWEAQFGDFVNGAQSIIDEFISSGEAKWGQLSNVVLLLPHGHEGQGPDHTSARIERFLQLWAEGSMTIAMPSTPSNYFHLLRRHALDGIQRPLIVFTPKSMLRHKAAVSEIKDFTEIKFRSVLEEPTYEDGIGDRNKVSRILLTSGKLYYELAARKAKDNRNDLAIVRLEQLAPLPRRRLRETLDRYENVKEFFWVQEEPANQGAWPRFGLELPELLPDKLAGIKRISRRAMSAPSSGSSKVHAVEQQEILDEAFG.

The 2-oxoglutarate dehydrogenase E1, N-terminal part stretch occupies residues 1 to 41 (MANISSPFGQNEWLVEEMYRKFRDDPSSVDPSWHEFLVDYS). The tract at residues 38 to 79 (VDYSPEPTSQPAAEPTRVTSPLVAERAAAAAPQAPPKPADTA) is disordered. Positions 42–88 (PEPTSQPAAEPTRVTSPLVAERAAAAAPQAPPKPADTAAAGNGVVAA) are linker. Over residues 58-69 (PLVAERAAAAAP) the composition is skewed to low complexity. Positions 89 to 337 (LAAKTAVPPP…LRTIHELLLS (249 aa)) are succinyltransferase E2. H316 acts as the Proton acceptor; for succinyltransferase activity in catalysis. The interval 338-1231 (DGFWDEVFRE…QQEILDEAFG (894 aa)) is 2-oxoglutarate dehydrogenase E1, C-terminal part. Residue R542 participates in thiamine diphosphate binding. Positions 581 and 606 each coordinate 2-oxoglutarate. S606, L608, D649, A650, A651, and N682 together coordinate thiamine diphosphate. D649 contacts Mg(2+). N682 and I684 together coordinate Mg(2+). Positions 787–817 (DISMKEAEDALRDYQGQLERVFNEVRELEKH) form a coiled coil. Position 1024 (H1024) interacts with 2-oxoglutarate. The acetyl-CoA site is built by T1042, R1058, K1093, S1096, Q1146, R1153, and R1154.

The protein belongs to the 2-oxoacid dehydrogenase family. Kgd subfamily. Homodimer. The 2-oxoglutarate dehydrogenase (ODH) complex contains multiple copies of three enzymatic components: 2-oxoglutarate dehydrogenase (E1), dihydrolipoamide succinyltransferase (E2) and lipoamide dehydrogenase (E3). It depends on Mg(2+) as a cofactor. Thiamine diphosphate is required as a cofactor.

The catalysed reaction is glyoxylate + 2-oxoglutarate + H(+) = 2-hydroxy-3-oxoadipate + CO2. It catalyses the reaction 2-oxoglutarate + H(+) = succinate semialdehyde + CO2. It carries out the reaction N(6)-[(R)-lipoyl]-L-lysyl-[protein] + 2-oxoglutarate + H(+) = N(6)-[(R)-S(8)-succinyldihydrolipoyl]-L-lysyl-[protein] + CO2. The enzyme catalyses N(6)-[(R)-dihydrolipoyl]-L-lysyl-[protein] + succinyl-CoA = N(6)-[(R)-S(8)-succinyldihydrolipoyl]-L-lysyl-[protein] + CoA. The protein operates within carbohydrate metabolism; tricarboxylic acid cycle; succinate from 2-oxoglutarate (transferase route): step 1/2. Its pathway is carbohydrate metabolism; tricarboxylic acid cycle; succinyl-CoA from 2-oxoglutarate (dehydrogenase route): step 1/1. Alpha-ketoglutarate dehydrogenase and decarboxylase activities are inhibited by unphosphorylated GarA, and allosterically activated by acetyl-CoA, the main substrate of the TCA cycle. Shows three enzymatic activities that share a first common step, the attack of thiamine-PP on 2-oxoglutarate (alpha-ketoglutarate, KG), leading to the formation of an enamine-thiamine-PP intermediate upon decarboxylation. Thus, displays KGD activity, catalyzing the decarboxylation from five-carbon 2-oxoglutarate to four-carbon succinate semialdehyde (SSA). Also catalyzes C-C bond formation between the activated aldehyde formed after decarboxylation of alpha-ketoglutarate and the carbonyl of glyoxylate (GLX), to yield 2-hydroxy-3-oxoadipate (HOA), which spontaneously decarboxylates to form 5-hydroxylevulinate (HLA). And is also a component of the 2-oxoglutarate dehydrogenase (ODH) complex, that catalyzes the overall conversion of 2-oxoglutarate to succinyl-CoA and CO(2). The KG decarboxylase and KG dehydrogenase reactions provide two alternative, tightly regulated, pathways connecting the oxidative and reductive branches of the TCA cycle. The polypeptide is Multifunctional 2-oxoglutarate metabolism enzyme (kgd) (Mycobacterium tuberculosis (strain ATCC 25177 / H37Ra)).